Consider the following 271-residue polypeptide: uncharacterized protein (271 aa).

Disordered regions lie at residues 50 to 93 and 128 to 233; these read KKKT…SSSL and KNNY…RKKV. Composition is skewed to low complexity over residues 61–93 and 129–165; these read SPTK…SSSL and NNYN…NNNN. Positions 169-179 are enriched in basic and acidic residues; it reads TDKKEGEKNEN. 2 stretches are compositionally biased toward acidic residues: residues 180 to 199 and 207 to 217; these read ENEN…DIIE and MDEELENEQVE.

This is an uncharacterized protein from Dictyostelium discoideum (Social amoeba).